The sequence spans 523 residues: MVGSSNSLAGLQDHLKLAREYALEGSYDTSVIFFDGAIAQINKHLNTLDDPLARTKWMNVKKAIMEETEVVKQLDAERRAFKEAPTGRRAASPPINTKSSFVFQPLDEYPTSSGGGPMDDPDVWRPPTRDVTSRRPARAGQTGTRKSPQDGAWARGPTTRTGPASRGGRGGATSKSTAGARSSTAGKKGAASKSNKAESMNGDAEDGKSKRGLYEGPDEDLAAMLERDVLDSTPGVRWDDVAGLSEAKRLLEEAVVLPLWMPEYFQGIRRPWKGVLMFGPPGTGKTLLAKAVATECGTTFFNVSSATLASKWRGESERMVRCLFDLARAYAPSTIFIDEIDSLCNSRGGSGEHESSRRVKSELLVQVDGVSNTATNEDGSRKIVMVLAATNFPWDIDEALRRRLEKRIYIPLPDFESRKALININLRTVEVASDVNIEDVARRTEGYSGDDLTNVCRDASMNGMRRKIAGKTRDEIKNMSKDDISNDPVAMCDFEEAIRKVQPSVSSSDIEKHEKWLSEFGSA.

The interval 82–215 (KEAPTGRRAA…DGKSKRGLYE (134 aa)) is disordered. Over residues 178–194 (AGARSSTAGKKGAASKS) the composition is skewed to low complexity. ATP is bound at residue 279–286 (GPPGTGKT).

The protein belongs to the AAA ATPase family. Katanin p60 subunit A1 subfamily. May homooligomerize. Component of KTN80-KTN1 complexes composed of a hexamer of KTN1-KTN80 heterodimers that sense microtubule (MT) geometry to confer precise MT severing. Interacts directly with KTN80.1, KTN80.2, KTN80.3 and KTN80.4. Can interact with KTN80.1. May interact with the kinesin related protein KIN14A. Interacts with microtubule polymers. Binds to IPGA1. As to expression, expressed ubiquitously, including siliques, flowers, leaves, stems and roots.

The protein localises to the cytoplasm. It is found in the cytoskeleton. The enzyme catalyses n ATP + n H2O + a microtubule = n ADP + n phosphate + (n+1) alpha/beta tubulin heterodimers.. In terms of biological role, severs microtubules in vitro in an ATP-dependent manner. Required for oligomerization of functional KTN80-KTN1 complexes that catalyze microtubule severing. This activity may promote rapid reorganization of cellular microtubule arrays. May be required for reorientation of cortical microtubule arrays during cellular elongation. Failure to correctly orient these arrays drastically compromises fiber length, cell wall thickness and mechanical strength. May also be required for the spatial organization of developmental cues within the root. Involved in the IPGA1- and AN-dependent regulation of pavement cells morphogenesis leading to puzzle shape. In Arabidopsis thaliana (Mouse-ear cress), this protein is Katanin p60 ATPase-containing subunit A1.